Reading from the N-terminus, the 671-residue chain is Probable potassium transport system protein Kup 2 (671 aa).

The next 12 membrane-spanning stretches (helical) occupy residues 18-38, 60-80, 103-123, 149-169, 173-193, 218-238, 252-272, 292-312, 343-363, 373-393, 402-422, and 424-444; these read GFLI…LYAM, VSLV…LIAL, WLIV…ALTP, VTTL…ASLV, FGPI…INSF, AGFF…ALYS, WPFV…WLLA, MVIY…QALI, LYIP…VLYF, YSLA…YFLI, IAFI…ASLV, and FING…VMFI.

Belongs to the HAK/KUP transporter (TC 2.A.72) family.

The protein localises to the cell membrane. The enzyme catalyses K(+)(in) + H(+)(in) = K(+)(out) + H(+)(out). In terms of biological role, transport of potassium into the cell. Likely operates as a K(+):H(+) symporter. The protein is Probable potassium transport system protein Kup 2 of Lactococcus lactis subsp. cremoris (strain MG1363).